A 187-amino-acid chain; its full sequence is Benzene 1,2-dioxygenase subunit beta (187 aa).

This sequence belongs to the bacterial ring-hydroxylating dioxygenase beta subunit family. As to quaternary structure, this dioxygenase system consists of four proteins: the two subunits of the hydroxylase component (BnzA and BnzB), a ferredoxin (BnzC) and a ferredoxin reductase (BnzD). The cofactor is [2Fe-2S] cluster. It depends on Fe cation as a cofactor.

The enzyme catalyses benzene + NADH + O2 + H(+) = cis-1,2-dihydrobenzene-1,2-diol + NAD(+). It catalyses the reaction toluene + NADH + O2 + H(+) = (1S,2R)-3-methylcyclohexa-3,5-diene-1,2-diol + NAD(+). It functions in the pathway aromatic compound metabolism; benzene degradation; catechol from benzene: step 1/2. The protein operates within xenobiotic degradation; toluene degradation. Its pathway is xenobiotic degradation; xylene degradation. Its function is as follows. Catalyzes both the oxidation of benzene and toluene. The beta subunit may be responsible for the substrate specificity of the enzyme. The sequence is that of Benzene 1,2-dioxygenase subunit beta (bnzB) from Pseudomonas putida (strain ATCC 700007 / DSM 6899 / JCM 31910 / BCRC 17059 / LMG 24140 / F1).